Consider the following 383-residue polypeptide: Cytochrome b (383 aa).

The next 4 helical transmembrane spans lie at 32 to 52 (VGSL…FLAM), 76 to 98 (WLMR…LHMG), 113 to 133 (VWSM…MGYC), and 179 to 199 (FFAL…MHFM). Positions 82 and 96 each coordinate heme b. Heme b contacts are provided by His183 and His197. His202 provides a ligand contact to a ubiquinone. A run of 4 helical transmembrane segments spans residues 225–245 (FVFK…LFVF), 289–309 (LGGV…PMTD), 321–341 (LSKL…NMGQ), and 348–368 (FIEL…MLVP).

It belongs to the cytochrome b family. As to quaternary structure, fungal cytochrome b-c1 complex contains 10 subunits; 3 respiratory subunits, 2 core proteins and 5 low-molecular weight proteins. Cytochrome b-c1 complex is a homodimer. The cofactor is heme b.

The protein localises to the mitochondrion inner membrane. Its function is as follows. Component of the ubiquinol-cytochrome c reductase complex (complex III or cytochrome b-c1 complex) that is part of the mitochondrial respiratory chain. The b-c1 complex mediates electron transfer from ubiquinol to cytochrome c. Contributes to the generation of a proton gradient across the mitochondrial membrane that is then used for ATP synthesis. This chain is Cytochrome b (COB), found in Debaryomyces hansenii (strain ATCC 36239 / CBS 767 / BCRC 21394 / JCM 1990 / NBRC 0083 / IGC 2968) (Yeast).